The primary structure comprises 70 residues: Large ribosomal subunit protein uL29 (70 aa).

Belongs to the universal ribosomal protein uL29 family.

The sequence is that of Large ribosomal subunit protein uL29 from Gloeobacter violaceus (strain ATCC 29082 / PCC 7421).